The primary structure comprises 125 residues: CLAVATA3/ESR (CLE)-related protein ESR3 (125 aa).

The first 26 residues, 1–26 (MASRMGMVAIMSLFVYAIVVPTSVNA), serve as a signal peptide directing secretion. A disordered region spans residues 45-125 (QQQGGFIGHR…IGPPPLPDRY (81 aa)). Hydroxyproline occurs at positions 75 and 78. Proline 78 carries an O-linked (Ara...) hydroxyproline glycan.

Belongs to the CLV3/ESR signal peptide family. The O-glycosylation (arabinosylation) of the hydroxyproline Pro-78 enhances binding affinity of the ESR3p peptide for its receptor. Seed endosperm.

Its subcellular location is the secreted. The protein resides in the extracellular space. Extracellular signal peptide that regulates cell fate. In Zea mays (Maize), this protein is CLAVATA3/ESR (CLE)-related protein ESR3.